The sequence spans 665 residues: Methionine--tRNA ligase (665 aa).

Positions 12-22 (YYPSGKLHIGS) match the 'HIGH' region motif. The 'KMSKS' region signature appears at 308–312 (KMSKS). Lys-311 serves as a coordination point for ATP. The 104-residue stretch at 562–665 (TFDAVEIRVA…SSVPNGSIIG (104 aa)) folds into the tRNA-binding domain.

This sequence belongs to the class-I aminoacyl-tRNA synthetase family. MetG type 2B subfamily. Homodimer.

The protein resides in the cytoplasm. It carries out the reaction tRNA(Met) + L-methionine + ATP = L-methionyl-tRNA(Met) + AMP + diphosphate. Functionally, is required not only for elongation of protein synthesis but also for the initiation of all mRNA translation through initiator tRNA(fMet) aminoacylation. The protein is Methionine--tRNA ligase (metG) of Streptococcus pyogenes serotype M1.